Reading from the N-terminus, the 487-residue chain is Glutamate--tRNA ligase (487 aa).

The 'HIGH' region signature appears at 11 to 21 (PSPTGYPHLGN). 4 residues coordinate Zn(2+): cysteine 108, cysteine 110, cysteine 135, and aspartate 137. The 'KMSKS' region signature appears at 245–249 (KLSKR). Lysine 248 lines the ATP pocket.

The protein belongs to the class-I aminoacyl-tRNA synthetase family. Glutamate--tRNA ligase type 1 subfamily. Monomer. The cofactor is Zn(2+).

Its subcellular location is the cytoplasm. The enzyme catalyses tRNA(Glu) + L-glutamate + ATP = L-glutamyl-tRNA(Glu) + AMP + diphosphate. Catalyzes the attachment of glutamate to tRNA(Glu) in a two-step reaction: glutamate is first activated by ATP to form Glu-AMP and then transferred to the acceptor end of tRNA(Glu). The chain is Glutamate--tRNA ligase from Dehalococcoides mccartyi (strain ATCC BAA-2100 / JCM 16839 / KCTC 5957 / BAV1).